The primary structure comprises 356 residues: Histidinol-phosphate aminotransferase (356 aa).

At Lys-214 the chain carries N6-(pyridoxal phosphate)lysine.

The protein belongs to the class-II pyridoxal-phosphate-dependent aminotransferase family. Histidinol-phosphate aminotransferase subfamily. As to quaternary structure, homodimer. The cofactor is pyridoxal 5'-phosphate.

It catalyses the reaction L-histidinol phosphate + 2-oxoglutarate = 3-(imidazol-4-yl)-2-oxopropyl phosphate + L-glutamate. Its pathway is amino-acid biosynthesis; L-histidine biosynthesis; L-histidine from 5-phospho-alpha-D-ribose 1-diphosphate: step 7/9. The polypeptide is Histidinol-phosphate aminotransferase (Shigella dysenteriae serotype 1 (strain Sd197)).